Here is a 345-residue protein sequence, read N- to C-terminus: KRR1 small subunit processome component homolog (345 aa).

In terms of domain architecture, KH spans 125-193 (DIIKIGNLVH…VRDIVLETMN (69 aa)). Over residues 232-245 (NISKRKQPKVKKQK) the composition is skewed to basic residues. 2 disordered regions span residues 232–260 (NISK…ESKV) and 273–329 (QEQK…VDVK). Residues 270-298 (FLNQEQKQAKRNQERTEKQKEAAKRQDER) are a coiled coil. Basic and acidic residues-rich tracts occupy residues 276 to 302 (KQAK…RNKD) and 315 to 329 (LKKE…VDVK).

It belongs to the KRR1 family. In terms of assembly, monomer. Component of the ribosomal small subunit (SSU) processome.

It is found in the nucleus. The protein localises to the nucleolus. Its function is as follows. Required for 40S ribosome biogenesis. Involved in nucleolar processing of pre-18S ribosomal RNA and ribosome assembly. Binds to RNA. Required for female germline development, cell viability during eye development and for survival of dividing cells and epithelial cells during early wing disk development. The polypeptide is KRR1 small subunit processome component homolog (Drosophila erecta (Fruit fly)).